Consider the following 1196-residue polypeptide: uncharacterized protein (1196 aa).

A helical transmembrane segment spans residues 27-47 (ILLLLGSFILLNVWINVVTLL). Disordered regions lie at residues 150-345 (GGGE…PQAH), 367-402 (SSVP…ASAP), 669-762 (TQDS…QKNT), 775-806 (CLTQ…DSGI), 826-877 (QATD…QDSE), 960-1009 (YRSS…GPYK), and 1168-1196 (KCEA…DIRM). Residues 157–177 (VTASKAQASLLSRPETSSQFP) are compositionally biased toward polar residues. Composition is skewed to low complexity over residues 212 to 227 (HSPT…HPWT) and 253 to 279 (THSQ…TPAH). The segment covering 299–321 (HTSAQAQTHSPPHTPEYTHSQAH) has biased composition (polar residues). Over residues 391 to 402 (APTPAPVPASAP) the composition is skewed to pro residues. Composition is skewed to polar residues over residues 733 to 742 (YLCQNPSPSQ), 750 to 762 (SGIT…QKNT), 787 to 804 (PFTQ…TQDS), and 826 to 849 (QATD…TGNV). Residues 962–971 (SSEHSQDSNL) show a composition bias toward basic and acidic residues.

It localises to the membrane. This is an uncharacterized protein from Homo sapiens (Human).